The sequence spans 840 residues: Phosphatidylglycerol lysyltransferase (840 aa).

Residues 1–8 (MNQEVKNK) are Cytoplasmic-facing. Residues 9 to 29 (IFSILKITFATALFIFVVITL) form a helical membrane-spanning segment. Topologically, residues 30 to 52 (YRELSGINFKDTLVEFSKINRMS) are extracellular. A helical transmembrane segment spans residues 53 to 73 (LVLLFIGGGASLVILSMYDVI). Residues 74-89 (LSRALKMDISLGKVLR) are Cytoplasmic-facing. Residues 90–110 (VSYIINALNAIVGFGGFIGAG) traverse the membrane as a helical segment. The Extracellular segment spans residues 111 to 128 (VRAMVYKNYTHDKKKLVH). Residues 129–149 (FISLILISMLTGLSLLSLLIV) traverse the membrane as a helical segment. Residues 150–161 (FHVFDASLILNK) lie on the Cytoplasmic side of the membrane. Residues 162-182 (ITWVRWVLYAVSLFLPLFIIY) form a helical membrane-spanning segment. At 183–200 (SMVRPPDKNNRYVGLYCT) the chain is on the extracellular side. Residues 201–221 (LVSCVEWLAAAVVLYFCGVIV) traverse the membrane as a helical segment. At 222–229 (DVHVSFMS) the chain is on the cytoplasmic side. A helical transmembrane segment spans residues 230-250 (FIAIFIIAALSGLVSFIPGGF). Residues 251-271 (GAFDLVVLLGFKTLGVPEEKV) are Extracellular-facing. Residues 272–292 (LLMLLLYRFAYYFVPVIIALI) traverse the membrane as a helical segment. The Cytoplasmic portion of the chain corresponds to 293–337 (LSSFEFGTSAKKYIEGSKYFIPAKDVTSFLMSYQKDIIAKIPSLS). The helical transmembrane segment at 338–358 (LAILVFFTSMIFFVNNLTIVY) threads the bilayer. Topologically, residues 359–369 (DALYDGNHLTY) are extracellular. A helical membrane pass occupies residues 370–390 (YLLLAIHTSACLLLLLNVVGI). The Cytoplasmic portion of the chain corresponds to 391–394 (YKQS). Transmembrane regions (helical) follow at residues 395 to 415 (RRAI…TLFT) and 416 to 436 (YASY…IVAF). Over 437-450 (RRARRLKRPIRMRN) the chain is Cytoplasmic. A helical membrane pass occupies residues 451 to 471 (LVAMLLFSIFILYINHIFIAG). Over 472-489 (TFYALDVYTIEMHTSVLK) the chain is Extracellular. A helical transmembrane segment spans residues 490-510 (YYFWITILIIAIIVGAIAWLF). Residues 511-840 (DYQFSKVRIS…SKVMRVIRHK (330 aa)) are Cytoplasmic-facing.

This sequence belongs to the LPG synthase family.

Its subcellular location is the cell membrane. The catalysed reaction is L-lysyl-tRNA(Lys) + a 1,2-diacyl-sn-glycero-3-phospho-(1'-sn-glycerol) = a 1,2-diacyl-sn-glycero-3-phospho-1'-(3'-O-L-lysyl)-sn-glycerol + tRNA(Lys). In terms of biological role, catalyzes the transfer of a lysyl group from L-lysyl-tRNA(Lys) to membrane-bound phosphatidylglycerol (PG), which produces lysylphosphatidylglycerol (LPG), a major component of the bacterial membrane with a positive net charge. LPG synthesis contributes to bacterial virulence as it is involved in the resistance mechanism against cationic antimicrobial peptides (CAMP) produces by the host's immune system (defensins, cathelicidins) and by the competing microorganisms (bacteriocins). In fact, the modification of anionic phosphatidylglycerol with positively charged L-lysine results in repulsion of the peptides. In Staphylococcus aureus (strain MRSA252), this protein is Phosphatidylglycerol lysyltransferase (mprF).